Consider the following 825-residue polypeptide: METLTSRHEKRALHSQASAISQDREEKIMSQEPLSFKDVAVVFTEEELELLDSTQRQLYQDVMQENFRNLLSVGERNPLGDKNGKDTEYIQDEELRFFSHKELSSCKIWEEVAGELPGSQDCRVNLQGKDFQFSEDAAPHQGWEGASTPCFPIENFLDSLQGDGLIGLENQQFPAWRAIRPIPIQGSWAKAFVNQLGDVQERCKNLDTEDTVYKCNWDDDSFCWISCHVDHRFPEIDKPCGCNKCRKDCIKNSVLHRINPGENGLKSNEYRNGFRDDADLPPHPRVPLKEKLCQYDEFSEGLRHSAHLNRHQRVPTGEKSVKSLERGRGVRQNTHIRNHPRAPVGDMPYRCDVCGKGFRYKSVLLIHQGVHTGRRPYKCEECGKAFGRSSNLLVHQRVHTGEKPYKCSECGKGFSYSSVLQVHQRLHTGEKPYTCSECGKGFCAKSALHKHQHIHPGEKPYSCGECGKGFSCSSHLSSHQKTHTGERPYQCDKCGKGFSHNSYLQAHQRVHMGQHLYKCNVCGKSFSYSSGLLMHQRLHTGEKPYKCECGKSFGRSSDLHIHQRVHTGEKPYKCSECGKGFRRNSDLHSHQRVHTGERPYVCDVCGKGFIYSSDLLIHQRVHTGEKPYKCAECGKGFSYSSGLLIHQRVHTGEKPYRCQECGKGFRCTSSLHKHQRVHTGKKPYTCDQCGKGFSYGSNLRTHQRLHTGEKPYTCCECGKGFRYGSGLLSHKRVHTGEKPYRCHVCGKGYSQSSHLQGHQRVHTGEKPYKCEECGKGFGRNSCLHVHQRVHTGEKPYTCGVCGKGFSYTSGLRNHQRVHLGENPYK.

Residues 1 to 26 form a disordered region; it reads METLTSRHEKRALHSQASAISQDREE. The 75-residue stretch at 34–108 folds into the KRAB domain; that stretch reads LSFKDVAVVF…SHKELSSCKI (75 aa). The segment at 291 to 315 adopts a C2H2-type 1; degenerate zinc-finger fold; sequence KLCQYDEFSEGLRHSAHLNRHQRVP. 7 C2H2-type zinc fingers span residues 349–371, 377–399, 405–427, 433–455, 461–483, 489–511, and 517–539; these read YRCDVCGKGFRYKSVLLIHQGVH, YKCEECGKAFGRSSNLLVHQRVH, YKCSECGKGFSYSSVLQVHQRLH, YTCSECGKGFCAKSALHKHQHIH, YSCGECGKGFSCSSHLSSHQKTH, YQCDKCGKGFSHNSYLQAHQRVH, and YKCNVCGKSFSYSSGLLMHQRLH. Residue Lys-543 forms a Glycyl lysine isopeptide (Lys-Gly) (interchain with G-Cter in SUMO2) linkage. 10 C2H2-type zinc fingers span residues 545–566, 572–594, 600–622, 628–650, 656–678, 684–706, 712–734, 740–762, 768–790, and 796–818; these read YKCECGKSFGRSSDLHIHQRVH, YKCSECGKGFRRNSDLHSHQRVH, YVCDVCGKGFIYSSDLLIHQRVH, YKCAECGKGFSYSSGLLIHQRVH, YRCQECGKGFRCTSSLHKHQRVH, YTCDQCGKGFSYGSNLRTHQRLH, YTCCECGKGFRYGSGLLSHKRVH, YRCHVCGKGYSQSSHLQGHQRVH, YKCEECGKGFGRNSCLHVHQRVH, and YTCGVCGKGFSYTSGLRNHQRVH.

It belongs to the krueppel C2H2-type zinc-finger protein family.

The protein localises to the nucleus. Functionally, may be involved in transcriptional regulation. This Homo sapiens (Human) protein is Zinc finger protein 229.